We begin with the raw amino-acid sequence, 180 residues long: MSRIGVKPIIIPAGVEVTIAEGNLVTVKGPKGTLTKQLSAELNIKKEENTIMVERPTDNKKHRSLHGLTRTLLDNMVVGVNTGFEKKLELKGVGYRAQKQGKKLVMNLGFSHPVEMEDPEGITVEAPNQTELIVKGIDKQLVGNYAAKIRAWRKPEPYKGKGIKYVDEVIRRKEGKTGKK.

Belongs to the universal ribosomal protein uL6 family. In terms of assembly, part of the 50S ribosomal subunit.

This protein binds to the 23S rRNA, and is important in its secondary structure. It is located near the subunit interface in the base of the L7/L12 stalk, and near the tRNA binding site of the peptidyltransferase center. The polypeptide is Large ribosomal subunit protein uL6 (Clostridioides difficile (strain 630) (Peptoclostridium difficile)).